The following is a 268-amino-acid chain: NADPH-dependent 7-cyano-7-deazaguanine reductase (268 aa).

79 to 81 lines the substrate pocket; the sequence is VES. 81–82 serves as a coordination point for NADPH; that stretch reads SK. The active-site Thioimide intermediate is the Cys-176. Asp-183 functions as the Proton donor in the catalytic mechanism. Substrate is bound at residue 215–216; the sequence is HE. NADPH is bound at residue 244-245; sequence RG.

It belongs to the GTP cyclohydrolase I family. QueF type 2 subfamily. As to quaternary structure, homodimer.

The protein localises to the cytoplasm. It catalyses the reaction 7-aminomethyl-7-carbaguanine + 2 NADP(+) = 7-cyano-7-deazaguanine + 2 NADPH + 3 H(+). It participates in tRNA modification; tRNA-queuosine biosynthesis. Catalyzes the NADPH-dependent reduction of 7-cyano-7-deazaguanine (preQ0) to 7-aminomethyl-7-deazaguanine (preQ1). This Saccharophagus degradans (strain 2-40 / ATCC 43961 / DSM 17024) protein is NADPH-dependent 7-cyano-7-deazaguanine reductase.